The sequence spans 245 residues: Pyridoxine 5'-phosphate synthase (245 aa).

Asparagine 7 provides a ligand contact to 3-amino-2-oxopropyl phosphate. 9–10 (DH) contacts 1-deoxy-D-xylulose 5-phosphate. 3-amino-2-oxopropyl phosphate is bound at residue arginine 18. Residue histidine 43 is the Proton acceptor of the active site. 1-deoxy-D-xylulose 5-phosphate is bound by residues arginine 45 and histidine 50. Glutamate 70 (proton acceptor) is an active-site residue. Position 100 (threonine 100) interacts with 1-deoxy-D-xylulose 5-phosphate. Histidine 190 (proton donor) is an active-site residue. 3-amino-2-oxopropyl phosphate contacts are provided by residues glycine 191 and 212–213 (GH).

It belongs to the PNP synthase family. In terms of assembly, homooctamer; tetramer of dimers.

It localises to the cytoplasm. It catalyses the reaction 3-amino-2-oxopropyl phosphate + 1-deoxy-D-xylulose 5-phosphate = pyridoxine 5'-phosphate + phosphate + 2 H2O + H(+). It functions in the pathway cofactor biosynthesis; pyridoxine 5'-phosphate biosynthesis; pyridoxine 5'-phosphate from D-erythrose 4-phosphate: step 5/5. Functionally, catalyzes the complicated ring closure reaction between the two acyclic compounds 1-deoxy-D-xylulose-5-phosphate (DXP) and 3-amino-2-oxopropyl phosphate (1-amino-acetone-3-phosphate or AAP) to form pyridoxine 5'-phosphate (PNP) and inorganic phosphate. This chain is Pyridoxine 5'-phosphate synthase, found in Prochlorococcus marinus (strain NATL1A).